Reading from the N-terminus, the 417-residue chain is Gamma-glutamyl phosphate reductase (417 aa).

Belongs to the gamma-glutamyl phosphate reductase family.

The protein resides in the cytoplasm. The enzyme catalyses L-glutamate 5-semialdehyde + phosphate + NADP(+) = L-glutamyl 5-phosphate + NADPH + H(+). It participates in amino-acid biosynthesis; L-proline biosynthesis; L-glutamate 5-semialdehyde from L-glutamate: step 2/2. Catalyzes the NADPH-dependent reduction of L-glutamate 5-phosphate into L-glutamate 5-semialdehyde and phosphate. The product spontaneously undergoes cyclization to form 1-pyrroline-5-carboxylate. The protein is Gamma-glutamyl phosphate reductase of Shigella boydii serotype 18 (strain CDC 3083-94 / BS512).